The sequence spans 197 residues: Xanthine phosphoribosyltransferase (197 aa).

Xanthine contacts are provided by L20 and N27. 128 to 132 (ANGQA) contributes to the 5-phospho-alpha-D-ribose 1-diphosphate binding site. K156 contributes to the xanthine binding site.

Belongs to the purine/pyrimidine phosphoribosyltransferase family. Xpt subfamily. In terms of assembly, homodimer.

The protein localises to the cytoplasm. It carries out the reaction XMP + diphosphate = xanthine + 5-phospho-alpha-D-ribose 1-diphosphate. The protein operates within purine metabolism; XMP biosynthesis via salvage pathway; XMP from xanthine: step 1/1. Converts the preformed base xanthine, a product of nucleic acid breakdown, to xanthosine 5'-monophosphate (XMP), so it can be reused for RNA or DNA synthesis. This Bacillus cereus (strain ZK / E33L) protein is Xanthine phosphoribosyltransferase.